We begin with the raw amino-acid sequence, 240 residues long: U1 small nuclear ribonucleoprotein C (240 aa).

The Matrin-type zinc-finger motif lies at 4–36; it reads YYCEYCDIYLTHSSPVGRRQHIQGRKHISAKIE. Disordered stretches follow at residues 86–122 and 175–240; these read GMKH…SKYH and IDSD…SVDA. Basic and acidic residues-rich tracts occupy residues 178–194 and 203–219; these read DPVK…DNAI and DQGD…HADH. Positions 226-240 are enriched in polar residues; sequence TDGTANGNDQVSVDA.

This sequence belongs to the U1 small nuclear ribonucleoprotein C family. U1 snRNP is composed of the 7 core Sm proteins B/B', D1, D2, D3, E, F and G that assemble in a heptameric protein ring on the Sm site of the small nuclear RNA to form the core snRNP, and at least 3 U1 snRNP-specific proteins U1-70K, U1-A and U1-C. U1-C interacts with U1 snRNA and the 5' splice-site region of the pre-mRNA.

The protein resides in the nucleus. In terms of biological role, component of the spliceosomal U1 snRNP, which is essential for recognition of the pre-mRNA 5' splice-site and the subsequent assembly of the spliceosome. U1-C is directly involved in initial 5' splice-site recognition for both constitutive and regulated alternative splicing. The interaction with the 5' splice-site seems to precede base-pairing between the pre-mRNA and the U1 snRNA. Stimulates commitment or early (E) complex formation by stabilizing the base pairing of the 5' end of the U1 snRNA and the 5' splice-site region. The polypeptide is U1 small nuclear ribonucleoprotein C (Plasmodium vivax (strain Salvador I)).